A 597-amino-acid chain; its full sequence is Putative diflavin flavoprotein A 3 (597 aa).

The interval 59 to 254 is zinc metallo-hydrolase; it reads QRGTTANSYL…YPAQTYAPSH (196 aa). Residues 283 to 421 form the Flavodoxin-like domain; it reads VALIYASAYG…MCEEAGTDFA (139 aa). Positions 449-597 are flavodoxin-reductase-like; the sequence is LGRLVGSLCV…VHHRKSGDHY (149 aa).

This sequence in the N-terminal section; belongs to the zinc metallo-hydrolase group 3 family. It in the C-terminal section; belongs to the flavodoxin reductase family. The cofactor is Fe cation.

Functionally, mediates electron transfer from NADH to oxygen, reducing it to water. This modular protein has 3 redox cofactors, in other organisms the same activity requires 2 or 3 proteins. This is Putative diflavin flavoprotein A 3 (dfa3) from Synechocystis sp. (strain ATCC 27184 / PCC 6803 / Kazusa).